Reading from the N-terminus, the 446-residue chain is 3-phosphoshikimate 1-carboxyvinyltransferase (446 aa).

Positions 21, 22, and 26 each coordinate 3-phosphoshikimate. Position 21 (Lys21) interacts with phosphoenolpyruvate. Residues Gly92 and Arg120 each contribute to the phosphoenolpyruvate site. 3-phosphoshikimate contacts are provided by Ser165, Gln166, Asp308, and Lys335. Gln166 serves as a coordination point for phosphoenolpyruvate. The active-site Proton acceptor is the Asp308. Residues Arg339, Arg380, and Lys406 each coordinate phosphoenolpyruvate.

Belongs to the EPSP synthase family. In terms of assembly, monomer.

It localises to the cytoplasm. The catalysed reaction is 3-phosphoshikimate + phosphoenolpyruvate = 5-O-(1-carboxyvinyl)-3-phosphoshikimate + phosphate. It participates in metabolic intermediate biosynthesis; chorismate biosynthesis; chorismate from D-erythrose 4-phosphate and phosphoenolpyruvate: step 6/7. Its function is as follows. Catalyzes the transfer of the enolpyruvyl moiety of phosphoenolpyruvate (PEP) to the 5-hydroxyl of shikimate-3-phosphate (S3P) to produce enolpyruvyl shikimate-3-phosphate and inorganic phosphate. In Chlamydia caviae (strain ATCC VR-813 / DSM 19441 / 03DC25 / GPIC) (Chlamydophila caviae), this protein is 3-phosphoshikimate 1-carboxyvinyltransferase.